A 278-amino-acid chain; its full sequence is HTH-type transcriptional activator RhaS (278 aa).

An HTH araC/xylS-type domain is found at 174-272 (NQLMAWLEDH…NWSPRDIRQG (99 aa)). 2 consecutive DNA-binding regions (H-T-H motif) follow at residues 191–212 (EAVA…KQHT) and 239–262 (VTEI…RREF).

In terms of assembly, binds DNA as a dimer.

The protein resides in the cytoplasm. Its function is as follows. Activates expression of the rhaBAD and rhaT operons. This Salmonella heidelberg (strain SL476) protein is HTH-type transcriptional activator RhaS.